We begin with the raw amino-acid sequence, 304 residues long: Recombination-associated protein RdgC (304 aa).

This sequence belongs to the RdgC family.

The protein resides in the cytoplasm. It is found in the nucleoid. May be involved in recombination. The protein is Recombination-associated protein RdgC of Shewanella baltica (strain OS185).